The following is a 387-amino-acid chain: Patatin group A-2 (387 aa).

Residues 1 to 23 (MATTKSFLILIVMILATTSSTFA) form the signal peptide. One can recognise a PNPLA domain in the interval 32-230 (LSIDGGGIKG…TVADPALLSV (199 aa)). A GXGXXG motif is present at residues 36–41 (GGGIKG). The GXSXG signature appears at 75-79 (GTSTG). S77 (nucleophile) is an active-site residue. N115 is a glycosylation site (N-linked (GlcNAc...) asparagine). D216 acts as the Proton acceptor in catalysis. The DGA/G motif lies at 216 to 218 (DGA). A coiled-coil region spans residues 361–385 (ETYEEALKRFAKLLSDRKKLRANKA).

Belongs to the patatin family. Tuber and stolon.

It is found in the vacuole. In terms of biological role, probable lipolytic acyl hydrolase (LAH), an activity which is thought to be involved in the response of tubers to pathogens. This chain is Patatin group A-2, found in Solanum tuberosum (Potato).